A 501-amino-acid polypeptide reads, in one-letter code: Pyruvate dehydrogenase protein X component, mitochondrial (501 aa).

The N-terminal 53 residues, M1–Q53, are a transit peptide targeting the mitochondrion. One can recognise a Lipoyl-binding domain in the interval P56 to V132. K97 carries the post-translational modification N6-lipoyllysine. The segment at K145–H176 is disordered. Residues A149–P169 show a composition bias toward pro residues. Residues R183–V220 enclose the Peripheral subunit-binding (PSBD) domain. Residue K194 is modified to N6-acetyllysine. Residue S196 is modified to Phosphoserine. A disordered region spans residues I228–P256. K394 carries the N6-succinyllysine modification.

This sequence belongs to the 2-oxoacid dehydrogenase family. In terms of assembly, part of the inner core of the multimeric pyruvate dehydrogenase complex that is composed of about 48 DLAT and 12 PDHX molecules. This core binds multiple copies of pyruvate dehydrogenase (subunits PDH1A and PDHB, E1), dihydrolipoamide acetyltransferase (DLAT, E2) and lipoamide dehydrogenase (DLD, E3). Interacts with SIRT4. Interacts with DLD. In terms of processing, delipoylated at Lys-97 by SIRT4, delipoylation decreases the PHD complex activity.

The protein localises to the mitochondrion matrix. Functionally, required for anchoring dihydrolipoamide dehydrogenase (E3) to the dihydrolipoamide transacetylase (E2) core of the pyruvate dehydrogenase complexes of eukaryotes. This specific binding is essential for a functional PDH complex. This Mus musculus (Mouse) protein is Pyruvate dehydrogenase protein X component, mitochondrial (Pdhx).